Reading from the N-terminus, the 351-residue chain is Probable cobalt-factor III C(17)-methyltransferase (351 aa).

The protein belongs to the precorrin methyltransferase family.

The catalysed reaction is Co(II)-factor III + S-adenosyl-L-methionine + H(+) = Co(II)-factor IV + S-adenosyl-L-homocysteine. It participates in cofactor biosynthesis; adenosylcobalamin biosynthesis; cob(II)yrinate a,c-diamide from sirohydrochlorin (anaerobic route): step 3/10. Functionally, methyltransferase that likely catalyzes the ring contraction and methylation of C-17 in cobalt-factor III to form cobalt-factor IV. May also convert cobalt-precorrin-3 to cobalt-precorrin-4. In Methanothermobacter thermautotrophicus (strain ATCC 29096 / DSM 1053 / JCM 10044 / NBRC 100330 / Delta H) (Methanobacterium thermoautotrophicum), this protein is Probable cobalt-factor III C(17)-methyltransferase (cbiH).